The primary structure comprises 314 residues: D-alanine--D-alanine ligase (314 aa).

In terms of domain architecture, ATP-grasp spans 114–309 (KQLWRAHGLP…FDALVLRILD (196 aa)). 140–195 (IEALGLPLIVKPVHEGSTIGISIVETRDALIAAHAEASRFDSAIMAERFVQGEEYT) lines the ATP pocket. 3 residues coordinate Mg(2+): Asp-263, Glu-276, and Asn-278.

This sequence belongs to the D-alanine--D-alanine ligase family. Requires Mg(2+) as cofactor. Mn(2+) is required as a cofactor.

It is found in the cytoplasm. It catalyses the reaction 2 D-alanine + ATP = D-alanyl-D-alanine + ADP + phosphate + H(+). The protein operates within cell wall biogenesis; peptidoglycan biosynthesis. Cell wall formation. In Chromohalobacter salexigens (strain ATCC BAA-138 / DSM 3043 / CIP 106854 / NCIMB 13768 / 1H11), this protein is D-alanine--D-alanine ligase.